A 141-amino-acid polypeptide reads, in one-letter code: Nucleoside diphosphate kinase (141 aa).

ATP-binding residues include Lys-11, Phe-59, Arg-87, Thr-93, Arg-104, and Asn-114. His-117 (pros-phosphohistidine intermediate) is an active-site residue.

The protein belongs to the NDK family. In terms of assembly, homotetramer. Requires Mg(2+) as cofactor.

Its subcellular location is the cytoplasm. The enzyme catalyses a 2'-deoxyribonucleoside 5'-diphosphate + ATP = a 2'-deoxyribonucleoside 5'-triphosphate + ADP. It carries out the reaction a ribonucleoside 5'-diphosphate + ATP = a ribonucleoside 5'-triphosphate + ADP. Functionally, major role in the synthesis of nucleoside triphosphates other than ATP. The ATP gamma phosphate is transferred to the NDP beta phosphate via a ping-pong mechanism, using a phosphorylated active-site intermediate. This Pseudomonas entomophila (strain L48) protein is Nucleoside diphosphate kinase.